A 406-amino-acid chain; its full sequence is Argininosuccinate synthase (406 aa).

Residues 11–19 (AYSGGLDTS) and Ala-38 contribute to the ATP site. Residues Tyr-91 and Ser-96 each coordinate L-citrulline. Residue Gly-121 coordinates ATP. Positions 123, 127, and 128 each coordinate L-aspartate. Asn-127 is an L-citrulline binding site. L-citrulline is bound by residues Arg-131, Ser-181, Ser-190, Glu-266, and Tyr-278.

It belongs to the argininosuccinate synthase family. Type 1 subfamily. Homotetramer.

It is found in the cytoplasm. The enzyme catalyses L-citrulline + L-aspartate + ATP = 2-(N(omega)-L-arginino)succinate + AMP + diphosphate + H(+). The protein operates within amino-acid biosynthesis; L-arginine biosynthesis; L-arginine from L-ornithine and carbamoyl phosphate: step 2/3. The polypeptide is Argininosuccinate synthase (Campylobacter jejuni subsp. jejuni serotype O:23/36 (strain 81-176)).